Consider the following 94-residue polypeptide: Aspartyl/glutamyl-tRNA(Asn/Gln) amidotransferase subunit C (94 aa).

Belongs to the GatC family. In terms of assembly, heterotrimer of A, B and C subunits.

It carries out the reaction L-glutamyl-tRNA(Gln) + L-glutamine + ATP + H2O = L-glutaminyl-tRNA(Gln) + L-glutamate + ADP + phosphate + H(+). The enzyme catalyses L-aspartyl-tRNA(Asn) + L-glutamine + ATP + H2O = L-asparaginyl-tRNA(Asn) + L-glutamate + ADP + phosphate + 2 H(+). Functionally, allows the formation of correctly charged Asn-tRNA(Asn) or Gln-tRNA(Gln) through the transamidation of misacylated Asp-tRNA(Asn) or Glu-tRNA(Gln) in organisms which lack either or both of asparaginyl-tRNA or glutaminyl-tRNA synthetases. The reaction takes place in the presence of glutamine and ATP through an activated phospho-Asp-tRNA(Asn) or phospho-Glu-tRNA(Gln). This is Aspartyl/glutamyl-tRNA(Asn/Gln) amidotransferase subunit C from Carboxydothermus hydrogenoformans (strain ATCC BAA-161 / DSM 6008 / Z-2901).